A 260-amino-acid polypeptide reads, in one-letter code: uncharacterized protein (260 aa).

Residues 1 to 22 (MKSIKRIGLCISLLILIIFATS) form the signal peptide. Cysteine 23 carries the N-palmitoyl cysteine lipid modification. A lipid anchor (S-diacylglycerol cysteine) is attached at cysteine 23.

Belongs to the staphylococcal tandem lipoprotein family.

It is found in the cell membrane. This is an uncharacterized protein from Staphylococcus aureus (strain N315).